The sequence spans 122 residues: Small ribosomal subunit protein uS13 (122 aa).

The disordered stretch occupies residues 95–122 (QLPVRGQRTHTNARTRKGKAKPIAGKKK).

The protein belongs to the universal ribosomal protein uS13 family. Part of the 30S ribosomal subunit. Forms a loose heterodimer with protein S19. Forms two bridges to the 50S subunit in the 70S ribosome.

Its function is as follows. Located at the top of the head of the 30S subunit, it contacts several helices of the 16S rRNA. In the 70S ribosome it contacts the 23S rRNA (bridge B1a) and protein L5 of the 50S subunit (bridge B1b), connecting the 2 subunits; these bridges are implicated in subunit movement. Contacts the tRNAs in the A and P-sites. This is Small ribosomal subunit protein uS13 from Beijerinckia indica subsp. indica (strain ATCC 9039 / DSM 1715 / NCIMB 8712).